The chain runs to 577 residues: Scoloptoxin SSD14 (577 aa).

The N-terminal stretch at 1-25 (MGTSYRKLGYVLFLMLGMIVEEGIA) is a signal peptide.

In terms of assembly, heterodimer composed of subunits alpha and beta; probably disulfide-linked. As to expression, expressed by the venom gland.

The protein localises to the secreted. Its function is as follows. Dose-dependently induces human platelet aggregation on both plasma rich platelet and washed platelet (max. response at 3.2 ug/mL) and causes hemolysis against mouse and rabbit erythrocytes (35 and 65% respectively at 5 ug/mL). Does not show hemolytic activity against human erythrocytes (even at 100 ug/mL). This Scolopendra dehaani (Thai centipede) protein is Scoloptoxin SSD14.